The chain runs to 668 residues: UvrABC system protein B (668 aa).

The region spanning T25 to A176 is the Helicase ATP-binding domain. An ATP-binding site is contributed by G38–T45. Residues Y91–I114 carry the Beta-hairpin motif. The region spanning Q429 to S591 is the Helicase C-terminal domain. The UVR domain occupies P626–K661.

This sequence belongs to the UvrB family. As to quaternary structure, forms a heterotetramer with UvrA during the search for lesions. Interacts with UvrC in an incision complex.

It localises to the cytoplasm. The UvrABC repair system catalyzes the recognition and processing of DNA lesions. A damage recognition complex composed of 2 UvrA and 2 UvrB subunits scans DNA for abnormalities. Upon binding of the UvrA(2)B(2) complex to a putative damaged site, the DNA wraps around one UvrB monomer. DNA wrap is dependent on ATP binding by UvrB and probably causes local melting of the DNA helix, facilitating insertion of UvrB beta-hairpin between the DNA strands. Then UvrB probes one DNA strand for the presence of a lesion. If a lesion is found the UvrA subunits dissociate and the UvrB-DNA preincision complex is formed. This complex is subsequently bound by UvrC and the second UvrB is released. If no lesion is found, the DNA wraps around the other UvrB subunit that will check the other stand for damage. This Acaryochloris marina (strain MBIC 11017) protein is UvrABC system protein B.